The sequence spans 86 residues: UPF0335 protein BR1752/BS1330_I1746 (86 aa).

It belongs to the UPF0335 family.

The protein is UPF0335 protein BR1752/BS1330_I1746 of Brucella suis biovar 1 (strain 1330).